Reading from the N-terminus, the 231-residue chain is uncharacterized protein (231 aa).

Residue 10-34 participates in NADP(+) binding; it reads VVTGAGSGIGEAIATLLHEEGAKVV. Serine 140 is a substrate binding site. Tyrosine 153 serves as the catalytic Proton acceptor.

Belongs to the short-chain dehydrogenases/reductases (SDR) family.

This is an uncharacterized protein from Staphylococcus aureus (strain MW2).